The chain runs to 213 residues: Guanylate kinase (213 aa).

The Guanylate kinase-like domain maps to 10-189; sequence GLLLMVVAPS…AYADLAHIYH (180 aa). 17 to 24 lines the ATP pocket; that stretch reads APSGVGKT.

The protein belongs to the guanylate kinase family.

It localises to the cytoplasm. The enzyme catalyses GMP + ATP = GDP + ADP. Its function is as follows. Essential for recycling GMP and indirectly, cGMP. The polypeptide is Guanylate kinase (gmk) (Caulobacter vibrioides (strain ATCC 19089 / CIP 103742 / CB 15) (Caulobacter crescentus)).